The primary structure comprises 1745 residues: ADAMTS-like protein 1 (1745 aa).

The N-terminal stretch at Met-1–Ser-28 is a signal peptide. The TSP type-1 1 domain maps to Glu-33 to Pro-82. 3 disulfide bridges follow: Cys-45/Cys-76, Cys-49/Cys-81, and Cys-60/Cys-66. Residue Asn-251 is glycosylated (N-linked (GlcNAc...) asparagine). 2 O-linked (Fuc...) serine glycosylation sites follow: Ser-310 and Ser-391. 6 consecutive TSP type-1 domains span residues Pro-376–Pro-424, Asp-436–Tyr-493, Glu-522–Asn-584, Glu-607–Pro-667, Cys-703–Asp-762, and Cys-763–Ala-825. An O-linked (Fuc...) threonine glycan is attached at Thr-451. Cystine bridges form between Cys-534–Cys-578, Cys-538–Cys-583, and Cys-549–Cys-567. Intrachain disulfides connect Cys-775–Cys-819, Cys-779–Cys-824, Cys-790–Cys-807, and Cys-874–Cys-922. The region spanning Pro-836 to Gly-938 is the Ig-like C2-type 1 domain. 2 disordered regions span residues Glu-966–Ala-991 and Val-1114–Arg-1137. Residues Ser-1115–Gly-1126 are compositionally biased toward low complexity. 3 consecutive Ig-like C2-type domains span residues Pro-1139–Thr-1241, Pro-1261–Leu-1352, and Pro-1378–Val-1468. 3 disulfides stabilise this stretch: Cys-1177–Cys-1225, Cys-1283–Cys-1336, and Cys-1401–Cys-1452. TSP type-1 domains are found at residues Cys-1528–Val-1591 and Cys-1649–Glu-1709. Residues Glu-1709–Ala-1745 form the PLAC domain.

Monomer. Glycosylated. O-fucosylated by POFUT2 on a serine or a threonine residue found within the consensus sequence C1-X(2)-(S/T)-C2-G of the TSP type-1 repeat domains where C1 and C2 are the first and second cysteine residue of the repeat, respectively. Fucosylated repeats can then be further glycosylated by the addition of a beta-1,3-glucose residue by the glucosyltransferase, B3GALTL. Fucosylation mediates the efficient secretion of ADAMTS family members. Can also be C-glycosylated with one or two mannose molecules on tryptophan residues within the consensus sequence W-X-X-W of the TPRs, and N-glycosylated. These other glycosylations can also facilitate secretion. Post-translationally, disulfide bonds are present.

The protein localises to the secreted. The protein resides in the extracellular space. It is found in the extracellular matrix. The polypeptide is ADAMTS-like protein 1 (Adamtsl1) (Mus musculus (Mouse)).